A 1006-amino-acid chain; its full sequence is Probable sulfite reductase [NADPH] flavoprotein component (1006 aa).

One can recognise an FAD-binding FR-type domain in the interval 622 to 852; the sequence is EKVFTVHVRA…AVKTSVMKLP (231 aa). FAD-binding positions include 658-669 and 788-798; these read YDIGEALGVYGV and IKRREYSISSS.

FAD is required as a cofactor. It depends on FMN as a cofactor.

The enzyme catalyses hydrogen sulfide + 3 NADP(+) + 3 H2O = sulfite + 3 NADPH + 4 H(+). Its pathway is sulfur metabolism; hydrogen sulfide biosynthesis; hydrogen sulfide from sulfite (NADPH route): step 1/1. Its function is as follows. This enzyme catalyzes the 6-electron reduction of sulfite to sulfide. This is one of several activities required for the biosynthesis of L-cysteine from sulfate. This Schizosaccharomyces pombe (strain 972 / ATCC 24843) (Fission yeast) protein is Probable sulfite reductase [NADPH] flavoprotein component.